A 160-amino-acid polypeptide reads, in one-letter code: Dihydrofolate reductase (160 aa).

Positions 1-160 (MLIAIWAMTQ…NVNYYRKKQQ (160 aa)) constitute a DHFR domain. 5-7 (IWA) serves as a coordination point for substrate. NADP(+) contacts are provided by residues 6-7 (WA) and 14-19 (IGNNNT). Glu27 provides a ligand contact to substrate. Position 43–46 (43–46 (GRKT)) interacts with NADP(+). Residue Arg57 coordinates substrate. NADP(+)-binding positions include 62-65 (LSKD) and 101-106 (CGGKSV). A substrate-binding site is contributed by Ser120.

This sequence belongs to the dihydrofolate reductase family.

The catalysed reaction is (6S)-5,6,7,8-tetrahydrofolate + NADP(+) = 7,8-dihydrofolate + NADPH + H(+). Its pathway is cofactor biosynthesis; tetrahydrofolate biosynthesis; 5,6,7,8-tetrahydrofolate from 7,8-dihydrofolate: step 1/1. Key enzyme in folate metabolism. Catalyzes an essential reaction for de novo glycine and purine synthesis, and for DNA precursor synthesis. This Mycoplasma genitalium (strain ATCC 33530 / DSM 19775 / NCTC 10195 / G37) (Mycoplasmoides genitalium) protein is Dihydrofolate reductase (folA).